The following is a 162-amino-acid chain: Phosphopantetheine adenylyltransferase (162 aa).

Position 11 (Ser11) interacts with substrate. ATP contacts are provided by residues 11–12 (SF) and His19. The substrate site is built by Lys43, Thr75, and Arg89. ATP-binding positions include 90-92 (GLR), Glu100, and 125-131 (YAFLSSS).

It belongs to the bacterial CoaD family. As to quaternary structure, homohexamer. The cofactor is Mg(2+).

Its subcellular location is the cytoplasm. The enzyme catalyses (R)-4'-phosphopantetheine + ATP + H(+) = 3'-dephospho-CoA + diphosphate. It participates in cofactor biosynthesis; coenzyme A biosynthesis; CoA from (R)-pantothenate: step 4/5. In terms of biological role, reversibly transfers an adenylyl group from ATP to 4'-phosphopantetheine, yielding dephospho-CoA (dPCoA) and pyrophosphate. This chain is Phosphopantetheine adenylyltransferase, found in Finegoldia magna (strain ATCC 29328 / DSM 20472 / WAL 2508) (Peptostreptococcus magnus).